A 789-amino-acid polypeptide reads, in one-letter code: Zinc finger protein GLIS1 (789 aa).

Basic and acidic residues-rich tracts occupy residues 1–16 and 63–74; these read MHCEVAEALSDKRPKE and RAHDLLRPRSPR. Disordered regions lie at residues 1 to 29, 53 to 93, and 278 to 304; these read MHCEVAEALSDKRPKEAPGAPGQGRGPVS, LLPR…YGHS, and PPLPGDLGGPPKRSRPGPASSDGQEGS. A compositionally biased stretch (polar residues) spans 80-92; it reads KTGSGKVNGSYGH. The segment at 366-391 adopts a C2H2-type 1 zinc-finger fold; the sequence is QACRWVDCCAAYEQQEELVRHIEKSH. The segment at 400-427 adopts a C2H2-type 2; atypical zinc-finger fold; the sequence is FTCFWAGCVRRYKPFNARYKLLIHMRVH. 3 consecutive C2H2-type zinc fingers follow at residues 433–457, 463–487, and 493–517; these read NKCMFEGCSKAFSRLENLKIHLRSH, YLCQHPGCQKAFSNSSDRAKHQRTH, and YACQIPGCSKRYTDPSSLRKHVKAH. Disordered regions lie at residues 506–529 and 573–684; these read DPSSLRKHVKAHSAKEQQVRKKLH and VYPG…QGYQ. Residues 511-527 carry the Bipartite nuclear localization signal motif; the sequence is RKHVKAHSAKEQQVRKK. Residues 648 to 658 show a composition bias toward low complexity; sequence ASQSQSPGGQS.

It belongs to the GLI C2H2-type zinc-finger protein family. As to quaternary structure, interacts with KLF4. Interacts with POU5F1 and/or POU5F1B. Interacts with SOX2. In terms of tissue distribution, in the adult, expressed highly in placenta and kidney and at lower levels in the testis, brain, colon, brown fat tissue and thymus. During embryo development, expressed in the frontal nasal region, branchial arches, somites, vibrissal and hair follicles, limb buds, craniofacial regions, ventral part of the tail, intervertebral disks, teeth, eyes and kidney.

It is found in the nucleus. Acts both as a repressor and an ctivator of transcription. Binds to the consensus sequence 5'-GACCACCCAC-3'. By controlling the expression of genes involved in cell differentiation inhibits the lineage commitment of multipotent cells. Prevents, for instance, the differentiation of multipotent mesenchymal cells into adipocyte and osteoblast. The sequence is that of Zinc finger protein GLIS1 from Mus musculus (Mouse).